Here is a 244-residue protein sequence, read N- to C-terminus: Phosphoadenosine 5'-phosphosulfate reductase (244 aa).

Cys239 functions as the Nucleophile; cysteine thiosulfonate intermediate in the catalytic mechanism.

Belongs to the PAPS reductase family. CysH subfamily.

It is found in the cytoplasm. The enzyme catalyses [thioredoxin]-disulfide + sulfite + adenosine 3',5'-bisphosphate + 2 H(+) = [thioredoxin]-dithiol + 3'-phosphoadenylyl sulfate. The protein operates within sulfur metabolism; hydrogen sulfide biosynthesis; sulfite from sulfate: step 3/3. Its function is as follows. Catalyzes the formation of sulfite from phosphoadenosine 5'-phosphosulfate (PAPS) using thioredoxin as an electron donor. In Salmonella arizonae (strain ATCC BAA-731 / CDC346-86 / RSK2980), this protein is Phosphoadenosine 5'-phosphosulfate reductase.